The following is a 487-amino-acid chain: Protein SMG9 (487 aa).

Disordered regions lie at residues 30–83 and 136–164; these read EDAA…PPAL and RDKG…LQPP. Basic and acidic residues predominate over residues 42 to 70; sequence LKKDRDREQETWDRERDKDRKLERDREAE.

It belongs to the SMG9 family.

In terms of biological role, involved in nonsense-mediated decay (NMD) of mRNAs containing premature stop codons. Probable component of kinase complex containing nonC and recruited to stalled ribosomes. The sequence is that of Protein SMG9 from Drosophila melanogaster (Fruit fly).